Reading from the N-terminus, the 185-residue chain is Large ribosomal subunit protein uL10 (185 aa).

Positions 165-185 (LRAKKEEQGGAGTPAPAEAAE) are disordered.

It belongs to the universal ribosomal protein uL10 family. Part of the ribosomal stalk of the 50S ribosomal subunit. The N-terminus interacts with L11 and the large rRNA to form the base of the stalk. The C-terminus forms an elongated spine to which L12 dimers bind in a sequential fashion forming a multimeric L10(L12)X complex.

Functionally, forms part of the ribosomal stalk, playing a central role in the interaction of the ribosome with GTP-bound translation factors. In Streptomyces griseus subsp. griseus (strain JCM 4626 / CBS 651.72 / NBRC 13350 / KCC S-0626 / ISP 5235), this protein is Large ribosomal subunit protein uL10.